A 175-amino-acid polypeptide reads, in one-letter code: Ribosome maturation factor RimP (175 aa).

A disordered region spans residues 152 to 175 (EFNRPTDGPGDDGDDGGDDEAGEA). Over residues 160–175 (PGDDGDDGGDDEAGEA) the composition is skewed to acidic residues.

It belongs to the RimP family.

It localises to the cytoplasm. Functionally, required for maturation of 30S ribosomal subunits. This chain is Ribosome maturation factor RimP, found in Nocardioides sp. (strain ATCC BAA-499 / JS614).